We begin with the raw amino-acid sequence, 267 residues long: Eukaryotic translation initiation factor 3 subunit J (267 aa).

Disordered stretches follow at residues 1–118 and 221–241; these read MAPS…DLKH and MREERAADKGNKKTKAAKTKV. Residues 28 to 46 show a composition bias toward acidic residues; it reads DEEEEDVLDSWDAAEDSEV. The stretch at 44–99 forms a coiled coil; the sequence is SEVEREKAAKAAAAAAKAEAEAAAKKKSKAQRIEERKQERKKLAEANESDEDSEED. Over residues 74–88 the composition is skewed to basic and acidic residues; sequence QRIEERKQERKKLAE. Positions 90 to 100 are enriched in acidic residues; it reads NESDEDSEEDE. 2 stretches are compositionally biased toward basic and acidic residues: residues 108–118 and 221–231; these read RRTEKEGDLKH and MREERAADKGN.

This sequence belongs to the eIF-3 subunit J family. Component of the eukaryotic translation initiation factor 3 (eIF-3) complex.

The protein localises to the cytoplasm. Its function is as follows. Component of the eukaryotic translation initiation factor 3 (eIF-3) complex, which is involved in protein synthesis of a specialized repertoire of mRNAs and, together with other initiation factors, stimulates binding of mRNA and methionyl-tRNAi to the 40S ribosome. The eIF-3 complex specifically targets and initiates translation of a subset of mRNAs involved in cell proliferation. The protein is Eukaryotic translation initiation factor 3 subunit J (hcr1) of Aspergillus fumigatus (strain CBS 144.89 / FGSC A1163 / CEA10) (Neosartorya fumigata).